The sequence spans 213 residues: Glutathione S-transferase DHAR2 (213 aa).

At C6 the chain carries S-glutathionyl cysteine. 2 residues coordinate glutathione: K8 and D19. Residues K8 and D19 each coordinate L-ascorbate. The GST N-terminal domain occupies 10-83 (AVGAPDVLGD…DVIVGLLEEK (74 aa)). C20 carries the S-glutathionyl cysteine modification. C20 functions as the Nucleophile in the catalytic mechanism. Residues 20-25 (CPFSQR) carry the Glutathione-binding motif. 5 residues coordinate glutathione: K47, V60, S73, H160, and W207. One can recognise a GST C-terminal domain in the interval 84 to 213 (YPEPSLKTPP…VAGWESKVNA (130 aa)). An L-ascorbate-binding site is contributed by K210.

Belongs to the GST superfamily. DHAR family. In terms of assembly, monomer. Spontaneous S-glutathionylation in the presence of oxidized glutathione (GSSG).

Its subcellular location is the cytoplasm. The protein localises to the cytosol. It carries out the reaction RX + glutathione = an S-substituted glutathione + a halide anion + H(+). The enzyme catalyses L-dehydroascorbate + 2 glutathione = glutathione disulfide + L-ascorbate. Displays a dual function. As a soluble protein, exhibits glutathione-dependent thiol transferase and dehydroascorbate (DHA) reductase activities. Exhibits glutathione-dependent thiol transferase and dehydroascorbate (DHA) reductase activities. Key component of the ascorbate recycling system. Involved in the redox homeostasis, especially in scavenging of ROS under oxidative stresses. Plays a role in ozone tolerance. The protein is Glutathione S-transferase DHAR2 (DHAR2) of Arabidopsis thaliana (Mouse-ear cress).